The following is a 957-amino-acid chain: Collagen alpha-1(I) chain (957 aa).

The interval Gly-1–Pro-957 is disordered. Over residues Phe-23–Met-33 the composition is skewed to low complexity. Basic and acidic residues predominate over residues Asn-45–Glu-59. Residue Ser-87 is modified to Phosphoserine. Low complexity-rich tracts occupy residues Asp-95–Ile-113 and Pro-125–Ala-138. Pro residues predominate over residues Pro-140 to Phe-152. 2 stretches are compositionally biased toward low complexity: residues Ala-186–Ser-210 and Ser-219–Pro-228. Residues Gly-277 to Gly-286 are compositionally biased toward gly residues. Composition is skewed to low complexity over residues Lys-330–Arg-356, Ala-365–Pro-384, Gln-426–Gln-453, Pro-488–Pro-516, Ala-576–Ala-590, Ala-603–Lys-618, Ser-649–Val-665, and Ala-707–Ala-731. A Phosphoserine modification is found at Ser-579. Composition is skewed to pro residues over residues Pro-772 to Ala-782 and Ala-818 to Val-833. A compositionally biased stretch (low complexity) spans Ile-854 to Pro-868. The span at Arg-869 to Ile-883 shows a compositional bias: basic and acidic residues. Over residues Pro-902–Pro-935 the composition is skewed to low complexity. The span at Pro-937–Pro-957 shows a compositional bias: pro residues.

This sequence belongs to the fibrillar collagen family. As to quaternary structure, trimers of one alpha 2(I) and two alpha 1(I) chains. In terms of processing, prolines at the third position of the tripeptide repeating unit (G-X-Y) are hydroxylated in some or all of the chains. In terms of tissue distribution, forms the fibrils of tendon, ligaments and bones. In bones, the fibrils are mineralized with calcium hydroxyapatite.

Its subcellular location is the secreted. The protein localises to the extracellular space. It localises to the extracellular matrix. In terms of biological role, type I collagen is a member of group I collagen (fibrillar forming collagen). The polypeptide is Collagen alpha-1(I) chain (Hippopotamus amphibius (Hippopotamus)).